A 119-amino-acid polypeptide reads, in one-letter code: Acidic phospholipase A2 CM-II (119 aa).

Residues Tyr-25, Gly-27, and Gly-29 each contribute to the Ca(2+) site. Residue His-45 is part of the active site. A Ca(2+)-binding site is contributed by Asp-46. Asp-87 is a catalytic residue.

The protein belongs to the phospholipase A2 family. Group II subfamily. D49 sub-subfamily. Requires Ca(2+) as cofactor. In terms of processing, contains 6 disulfide bonds. Expressed by the venom gland.

Its subcellular location is the secreted. It carries out the reaction a 1,2-diacyl-sn-glycero-3-phosphocholine + H2O = a 1-acyl-sn-glycero-3-phosphocholine + a fatty acid + H(+). Its function is as follows. PLA2 catalyzes the calcium-dependent hydrolysis of the 2-acyl groups in 3-sn-phosphoglycerides. The polypeptide is Acidic phospholipase A2 CM-II (Bitis nasicornis (Rhinoceros adder)).